The sequence spans 300 residues: Ribosomal protein bS6--L-glutamate ligase (300 aa).

One can recognise an ATP-grasp domain in the interval 104–287 (LQLLARQGID…IAGRMIQWIE (184 aa)). Residues Lys-141, 178–179 (EY), Asp-187, and 211–213 (RSN) contribute to the ATP site. The Mg(2+) site is built by Asp-248, Glu-260, and Asn-262. Asp-248, Glu-260, and Asn-262 together coordinate Mn(2+).

This sequence belongs to the RimK family. Mg(2+) serves as cofactor. Mn(2+) is required as a cofactor.

An L-glutamate ligase that catalyzes the ATP-dependent post-translational addition of glutamate residues to the C-terminus of ribosomal protein bS6 (RpsF). Is also able to catalyze the synthesis of poly-alpha-glutamate in vitro, via ATP hydrolysis from unprotected glutamate as substrate. The number of glutamate residues added to either RpsF or to poly-alpha-glutamate changes with pH. This is Ribosomal protein bS6--L-glutamate ligase from Salmonella agona (strain SL483).